We begin with the raw amino-acid sequence, 482 residues long: Zinc finger protein 223 (482 aa).

One can recognise a KRAB domain in the interval 8 to 78 (VTFKDVAVVF…DIATQREGNS (71 aa)). 5 consecutive C2H2-type zinc fingers follow at residues 176–198 (HSCDECGKSFCYISALHIHQRVH), 204–226 (FKCDVCGKEFSQSLHLQTHQRVH), 232–254 (FKCEQCGRGFRCRSALTVHCKLH), 260–282 (YNCEACGRAFIHDFQLQKHQRIH), and 288–310 (FKCEICSVSFRLRSSLNRHCVVH). A C2H2-type 6; degenerate zinc finger spans residues 316–338 (NSTGEYGKGFIRRLDLCKHQTIH). 3 consecutive C2H2-type zinc fingers follow at residues 344 to 366 (YNCKECGKSFRRSSYLLIHQRVH), 372 to 394 (YKCDKCGKSYITKSGLDLHHRAH), and 400 to 422 (YNCDDCGKSFRQASSILNHKRLH). The C2H2-type 10; degenerate zinc-finger motif lies at 428 to 450 (FKCEDCGKKLVYRSYRKDQQKNH).

The protein belongs to the krueppel C2H2-type zinc-finger protein family.

It localises to the nucleus. May be involved in transcriptional regulation. This is Zinc finger protein 223 (ZNF223) from Homo sapiens (Human).